A 375-amino-acid chain; its full sequence is Esterase AN6793 (375 aa).

Positions 138 to 158 (RHPQPGLDPGHGHRHKRMPPL) are disordered.

Belongs to the sidJ hydrolase family. As to quaternary structure, homodimer.

Its pathway is secondary metabolite biosynthesis. In terms of biological role, esterase; part of a cluster that mediates the biosynthesis of a yet undetermined secondary metabolite. With the HR-PKS AN6791, produces a pathway intermediate compound with molecular weight 258. In Emericella nidulans (strain FGSC A4 / ATCC 38163 / CBS 112.46 / NRRL 194 / M139) (Aspergillus nidulans), this protein is Esterase AN6793.